The chain runs to 1318 residues: Meiotically up-regulated gene 79 protein (1318 aa).

Disordered regions lie at residues 177 to 198, 208 to 227, and 360 to 387; these read PVNS…SGSY, EEEL…IVVT, and PQAL…PPKG. Residues 364-384 are compositionally biased toward low complexity; it reads AAAESPTTKAPTTKAPTSEAP. The PH domain maps to 1049 to 1158; the sequence is MISYKKMVLS…WIHSLNFNAA (110 aa).

The protein resides in the nucleus. Appears to have a role in sporulation. The protein is Meiotically up-regulated gene 79 protein (mug79) of Schizosaccharomyces pombe (strain 972 / ATCC 24843) (Fission yeast).